The primary structure comprises 207 residues: Ras-related protein Rab-8A (207 aa).

Residues S17, G18, V19, G20, K21, T22, C23, S35, S39, and T40 each coordinate GTP. T22 contributes to the Mg(2+) binding site. 2 short sequence motifs (switch) span residues D31–F45 and D63–G80. Mg(2+)-binding residues include T40 and D63. G66 lines the GTP pocket. T72 carries the phosphothreonine modification. GTP contacts are provided by N121, K122, D124, A152, and K153. S181 and S185 each carry phosphoserine. C204 carries the post-translational modification Cysteine methyl ester. C204 is lipidated: S-geranylgeranyl cysteine. Residues V205–L207 constitute a propeptide, removed in mature form.

Belongs to the small GTPase superfamily. Rab family. In terms of assembly, interacts (GTP-bound form) with MICALL1; regulates RAB8A association with recycling endosomes. Interacts with MICALL2; competes with RAB13 and is involved in E-cadherin endocytic recycling. Interacts (GTP-bound form) with MICAL1, MICALCL, MICAL3, EHBP1 and EHBP1L1; at least in case of MICAL1, MICALCL, MICAL3 and EHBP1L1 two molecules of RAB8A can bind to one molecule of the effector protein; ternary complexes of RAB8A, RAB13 and either MICAL1 or EHBP1L1 are possible. Interacts with EHD1. Interacts with MAP4K2 and SYTL4. Interacts with SGSM1 and SGSM3. Interacts with RABIF, RIMS2, RPH3A and RPH3A. Interacts with OPTN. Interacts with RAB3IP, RAB3IP functions as guanine exchange factor (GEF). Interacts with MYO5B. Interacts with CIMAP3. Interacts with BIRC6/bruce. Interacts with OCRL. Interacts with AHI1. Interacts with DCDC1. Interacts with LRRK2; interaction facilitates phosphorylation of Thr-72. Interacts with RAB31P, GDI1, GDI2, CHM, CHML, RABGGTA, RABGGTB, TBC1D15 and INPP5B; these interactions are dependent on Thr-72 not being phosphorylated. Interacts with RILPL1 and RILPL2; these interactions are dependent on the phosphorylation of Thr-72 by LRRK2. Interacts with DZIP1; prevents inhibition by the GDP-dissociation inhibitor GDI2. Interacts (in GDP-bound form) with RAB3IP/Rabin8, RAB3IP functions as guanine exchange factor (GEF) towards RAB8A. Interacts (in GDP-bound form) with RPGR, RPGR functions as GEF towards RAB8A. Mg(2+) is required as a cofactor. Phosphorylation of Thr-72 in the switch II region by LRRK2 prevents the association of RAB regulatory proteins, including CHM, CHML and RAB GDP dissociation inhibitors GDI1 and GDI2. Phosphorylation by LRRK2 is required for localization to stressed lysosomes.

Its subcellular location is the cell membrane. The protein localises to the golgi apparatus. It localises to the endosome membrane. It is found in the recycling endosome membrane. The protein resides in the cell projection. Its subcellular location is the cilium. The protein localises to the cytoplasmic vesicle. It localises to the phagosome membrane. It is found in the cytoplasm. The protein resides in the cytoskeleton. Its subcellular location is the microtubule organizing center. The protein localises to the centrosome. It localises to the centriole. It is found in the cilium basal body. The protein resides in the midbody. Its subcellular location is the lysosome. The enzyme catalyses GTP + H2O = GDP + phosphate + H(+). Its activity is regulated as follows. Regulated by guanine nucleotide exchange factors (GEFs) such as RAB3IP/Rabin8 and RPGR which promote the exchange of bound GDP for free GTP, GTPase activating proteins (GAPs) which increase the GTP hydrolysis activity, and GDP dissociation inhibitors (GDIs) which inhibit the dissociation of the nucleotide from the GTPase. Activated in response to insulin. The small GTPases Rab are key regulators of intracellular membrane trafficking, from the formation of transport vesicles to their fusion with membranes. Rabs cycle between an inactive GDP-bound form and an active GTP-bound form that is able to recruit to membranes different sets of downstream effectors directly responsible for vesicle formation, movement, tethering and fusion. RAB8A is involved in polarized vesicular trafficking and neurotransmitter release. Together with RAB11A, RAB3IP, the exocyst complex, PARD3, PRKCI, ANXA2, CDC42 and DNMBP promotes transcytosis of PODXL to the apical membrane initiation sites (AMIS), apical surface formation and lumenogenesis. Regulates the compacted morphology of the Golgi. Together with MYO5B and RAB11A participates in epithelial cell polarization. Also involved in membrane trafficking to the cilium and ciliogenesis. Together with MICALL2, may also regulate adherens junction assembly. May play a role in insulin-induced transport to the plasma membrane of the glucose transporter GLUT4 and therefore play a role in glucose homeostasis. Involved in autophagy. Participates in the export of a subset of neosynthesized proteins through a Rab8-Rab10-Rab11-dependent endososomal export route. Targeted to and stabilized on stressed lysosomes through LRRK2 phosphorylation. Suppresses stress-induced lysosomal enlargement through EHBP1 and EHNP1L1 effector proteins. The polypeptide is Ras-related protein Rab-8A (RAB8A) (Pongo abelii (Sumatran orangutan)).